The chain runs to 141 residues: Hemoglobin subunit alpha (141 aa).

Residues 1-141 (VLSSTDKSNV…VSTVLTSKYR (141 aa)) form the Globin domain. A Phosphoserine modification is found at Ser-3. An N6-succinyllysine mark is found at Lys-7 and Lys-11. At Lys-16 the chain carries N6-acetyllysine; alternate. Position 16 is an N6-succinyllysine; alternate (Lys-16). Tyr-24 carries the post-translational modification Phosphotyrosine. The residue at position 35 (Ser-35) is a Phosphoserine. Position 40 is an N6-succinyllysine (Lys-40). Position 58 (His-58) interacts with O2. His-87 is a binding site for heme b. Phosphoserine is present on Ser-102. Phosphothreonine is present on Thr-108. Residues Ser-124 and Ser-131 each carry the phosphoserine modification. Thr-134 and Thr-137 each carry phosphothreonine. At Ser-138 the chain carries Phosphoserine.

Belongs to the globin family. As to quaternary structure, heterotetramer of two alpha chains and two beta chains. In terms of tissue distribution, red blood cells.

Functionally, involved in oxygen transport from the lung to the various peripheral tissues. In terms of biological role, hemopressin acts as an antagonist peptide of the cannabinoid receptor CNR1. Hemopressin-binding efficiently blocks cannabinoid receptor CNR1 and subsequent signaling. In Pteropus vampyrus (Large flying fox), this protein is Hemoglobin subunit alpha.